The following is a 150-amino-acid chain: Arginine repressor (150 aa).

This sequence belongs to the ArgR family.

It is found in the cytoplasm. The protein operates within amino-acid biosynthesis; L-arginine biosynthesis [regulation]. In terms of biological role, regulates arginine biosynthesis genes. The sequence is that of Arginine repressor from Clostridium botulinum (strain Loch Maree / Type A3).